The chain runs to 349 residues: Anthranilate phosphoribosyltransferase (349 aa).

5-phospho-alpha-D-ribose 1-diphosphate contacts are provided by residues Gly82, 85–86, 92–95, 110–118, and Ser122; these read GD, NVSS, and KHGNRAVSG. Residue Gly82 coordinates anthranilate. Ser94 provides a ligand contact to Mg(2+). Asn113 is an anthranilate binding site. Arg168 provides a ligand contact to anthranilate. The Mg(2+) site is built by Asp227 and Glu228.

Belongs to the anthranilate phosphoribosyltransferase family. In terms of assembly, homodimer. The cofactor is Mg(2+).

It catalyses the reaction N-(5-phospho-beta-D-ribosyl)anthranilate + diphosphate = 5-phospho-alpha-D-ribose 1-diphosphate + anthranilate. Its pathway is amino-acid biosynthesis; L-tryptophan biosynthesis; L-tryptophan from chorismate: step 2/5. Functionally, catalyzes the transfer of the phosphoribosyl group of 5-phosphorylribose-1-pyrophosphate (PRPP) to anthranilate to yield N-(5'-phosphoribosyl)-anthranilate (PRA). The chain is Anthranilate phosphoribosyltransferase from Pseudomonas paraeruginosa (strain DSM 24068 / PA7) (Pseudomonas aeruginosa (strain PA7)).